The following is a 369-amino-acid chain: RNA pseudouridine synthase 5 (369 aa).

Residues 47-104 (APLLGWIQRIQNGQIQIDGEVVKDPNTLLRSGSKLVYSRLPWKEPDTPYSLEVLYEDD) form the S4 RNA-binding domain.

Belongs to the pseudouridine synthase RluA family.

It carries out the reaction a uridine in RNA = a pseudouridine in RNA. The protein is RNA pseudouridine synthase 5 of Arabidopsis thaliana (Mouse-ear cress).